We begin with the raw amino-acid sequence, 649 residues long: Threonine--tRNA ligase (649 aa).

The TGS domain maps to 1–60 (MHVVLPDGKQLELPMGATALDAASAIGPRLAQDALAATANGELVDLMTPLPDGASITLIT). The segment at 248-544 (DHRKLGRELE…LIEHYAGDFP (297 aa)) is catalytic. Residues Cys341, His392, and His521 each contribute to the Zn(2+) site.

The protein belongs to the class-II aminoacyl-tRNA synthetase family. As to quaternary structure, homodimer. Zn(2+) is required as a cofactor.

Its subcellular location is the cytoplasm. The catalysed reaction is tRNA(Thr) + L-threonine + ATP = L-threonyl-tRNA(Thr) + AMP + diphosphate + H(+). Catalyzes the attachment of threonine to tRNA(Thr) in a two-step reaction: L-threonine is first activated by ATP to form Thr-AMP and then transferred to the acceptor end of tRNA(Thr). Also edits incorrectly charged L-seryl-tRNA(Thr). In Deinococcus deserti (strain DSM 17065 / CIP 109153 / LMG 22923 / VCD115), this protein is Threonine--tRNA ligase.